The following is a 667-amino-acid chain: WD40 repeat-containing protein DDB_G0271002 (667 aa).

WD repeat units follow at residues 165 to 204 and 210 to 249; these read NHGV…PQET and KHKH…LLRI. Over residues 278-293 the composition is skewed to low complexity; that stretch reads SSNSRDNNNNNSNSNN. 3 disordered regions span residues 278–301, 316–345, and 389–440; these read SSNS…GIII, LVEN…DNDD, and DIIF…ATTT. The segment covering 325–345 has biased composition (acidic residues); it reads PMPEEEEEEEEEEVNQVDNDD. The segment covering 400 to 410 has biased composition (low complexity); sequence NQHQQQQQQNQ. Acidic residues predominate over residues 411–428; sequence EIEEEGQEGQEEQEDGTE. Over residues 429 to 440 the composition is skewed to low complexity; it reads NENNQGTIATTT.

This is WD40 repeat-containing protein DDB_G0271002 from Dictyostelium discoideum (Social amoeba).